Reading from the N-terminus, the 637-residue chain is MNDWSIDAARAGYNVTHWSQGFYGISDQGEVTVSPDPKNPDHKIGLNELAKDMVKAGVALPVLVRFPQILHHRVNSLCQAFDQAIQKYEYQADYLLVYPIKVNQQKTVVEEILASQASKEVPQLGLEAGSKPELMAVLAMAQKASSVIVCNGYKDNEYIRLALIGEKLGHKVYIVLEKLSELKMVLAESKRLGVKPRLGLRARLAFQGKGKWQASGGEKSKFGLSAAQILTVVDQLKQEDMLDSLQLLHFHLGSQIANIRDIRQGVSEAARFYCELRELGASINCFDVGGGLAVDYDGTRSQSNNSMNYGLSEYANNIVNVLTDICNEYEQPMPRIISESGRHLTAHHAVLITDVIGTEAYQVEEIQPPAEESPQLLHNMWQSWTEISGRADQRALIEIYHDSQSDLQEAQSLFALGQLSLAERAWAEQANLRVCHEVQGLLSTKNRYHRPIIDELNEKLADKFFVNFSLFQSLPDAWGIDQVFPVLPLSGLDKAPERRAVMLDITCDSDGIVDQYVDGQGIETTLPVPAWSAESPYLMGFFMVGAYQEILGDMHNLFGDTNSAVVSIEENGMTNIESVLAGDTVADVLRYVNLDAVDFMRTYEELVNQHIAEEERAQILEELQVGLKGYTYLEDFS.

Lys-101 carries the post-translational modification N6-(pyridoxal phosphate)lysine. 286–296 is a substrate binding site; that stretch reads FDVGGGLAVDY.

Belongs to the Orn/Lys/Arg decarboxylase class-II family. SpeA subfamily. Mg(2+) is required as a cofactor. The cofactor is pyridoxal 5'-phosphate.

The enzyme catalyses L-arginine + H(+) = agmatine + CO2. It functions in the pathway amine and polyamine biosynthesis; agmatine biosynthesis; agmatine from L-arginine: step 1/1. In terms of biological role, catalyzes the biosynthesis of agmatine from arginine. This Shewanella sp. (strain ANA-3) protein is Biosynthetic arginine decarboxylase.